The sequence spans 349 residues: Anthranilate phosphoribosyltransferase (349 aa).

Residues G82, 85–86 (GD), 92–95 (NVST), 110–118 (KHGNRAVSG), and S122 contribute to the 5-phospho-alpha-D-ribose 1-diphosphate site. An anthranilate-binding site is contributed by G82. A Mg(2+)-binding site is contributed by S94. N113 contributes to the anthranilate binding site. An anthranilate-binding site is contributed by R168. Residues D227 and E228 each coordinate Mg(2+).

It belongs to the anthranilate phosphoribosyltransferase family. Homodimer. Mg(2+) serves as cofactor.

The enzyme catalyses N-(5-phospho-beta-D-ribosyl)anthranilate + diphosphate = 5-phospho-alpha-D-ribose 1-diphosphate + anthranilate. It functions in the pathway amino-acid biosynthesis; L-tryptophan biosynthesis; L-tryptophan from chorismate: step 2/5. Catalyzes the transfer of the phosphoribosyl group of 5-phosphorylribose-1-pyrophosphate (PRPP) to anthranilate to yield N-(5'-phosphoribosyl)-anthranilate (PRA). This Pseudomonas fluorescens (strain ATCC BAA-477 / NRRL B-23932 / Pf-5) protein is Anthranilate phosphoribosyltransferase.